The primary structure comprises 224 residues: (S)-2-haloacid dehalogenase H-109 (224 aa).

D10 functions as the Nucleophile in the catalytic mechanism. Residues 11 to 12 (LY), R41, and 118 to 119 (SN) each bind an (S)-2-haloacid. The segment at 175-180 (SSNSWD) is important for catalytic activity.

This sequence belongs to the HAD-like hydrolase superfamily. S-2-haloalkanoic acid dehalogenase family.

The enzyme catalyses an (S)-2-haloacid + H2O = a (2R)-2-hydroxycarboxylate + a halide anion + H(+). It catalyses the reaction (S)-2-chloropropanoate + H2O = (R)-lactate + chloride + H(+). Its function is as follows. Catalyzes the hydrolytic dehalogenation of small (S)-2-haloalkanoic acids to yield the corresponding (R)-2-hydroxyalkanoic acids. Acts on acids of short chain lengths, C(2) to C(4), with inversion of configuration at C-2. Active with 2-halogenated carboxylic acids and converts only the S-isomer (or L-isomer) of 2-chloropropionic acid with inversion of configuration to produce R-lactate (or D-isomer). The chain is (S)-2-haloacid dehalogenase H-109 from Pseudomonas putida (Arthrobacter siderocapsulatus).